Here is a 135-residue protein sequence, read N- to C-terminus: MYAVVDVKDKQFKVQEGDTLYVPYHSDATAGQELTLDRVLLVSDGDGDVTLGTPTVEDATATARVLEHVKGDKVIVFKKKRRKRYRVKRGHRQQYTQIEIESLNANGPASSDDEEAAETSDAEPDEDPEAEPAEA.

The interval 85-135 (YRVKRGHRQQYTQIEIESLNANGPASSDDEEAAETSDAEPDEDPEAEPAEA) is disordered. Polar residues predominate over residues 93–107 (QQYTQIEIESLNANG). Positions 111–135 (SDDEEAAETSDAEPDEDPEAEPAEA) are enriched in acidic residues.

Belongs to the bacterial ribosomal protein bL21 family. Part of the 50S ribosomal subunit. Contacts protein L20.

In terms of biological role, this protein binds to 23S rRNA in the presence of protein L20. The chain is Large ribosomal subunit protein bL21 from Salinibacter ruber (strain DSM 13855 / M31).